The sequence spans 265 residues: Cytochrome c oxidase subunit 3 (265 aa).

Transmembrane regions (helical) follow at residues 41-61 (GGAR…FVWW), 85-105 (GFIL…WAFF), 137-157 (TLIL…ILAG), 162-182 (AVYA…FQGM), 200-220 (FFLA…FLII), and 245-265 (WHFV…WGGI).

Belongs to the cytochrome c oxidase subunit 3 family. In terms of assembly, component of the cytochrome c oxidase (complex IV, CIV), a multisubunit enzyme composed of a catalytic core of 3 subunits and several supernumerary subunits. The complex exists as a monomer or a dimer and forms supercomplexes (SCs) in the inner mitochondrial membrane with ubiquinol-cytochrome c oxidoreductase (cytochrome b-c1 complex, complex III, CIII).

The protein resides in the mitochondrion inner membrane. The catalysed reaction is 4 Fe(II)-[cytochrome c] + O2 + 8 H(+)(in) = 4 Fe(III)-[cytochrome c] + 2 H2O + 4 H(+)(out). Its function is as follows. Component of the cytochrome c oxidase, the last enzyme in the mitochondrial electron transport chain which drives oxidative phosphorylation. The respiratory chain contains 3 multisubunit complexes succinate dehydrogenase (complex II, CII), ubiquinol-cytochrome c oxidoreductase (cytochrome b-c1 complex, complex III, CIII) and cytochrome c oxidase (complex IV, CIV), that cooperate to transfer electrons derived from NADH and succinate to molecular oxygen, creating an electrochemical gradient over the inner membrane that drives transmembrane transport and the ATP synthase. Cytochrome c oxidase is the component of the respiratory chain that catalyzes the reduction of oxygen to water. Electrons originating from reduced cytochrome c in the intermembrane space (IMS) are transferred via the dinuclear copper A center (CU(A)) of subunit 2 and heme A of subunit 1 to the active site in subunit 1, a binuclear center (BNC) formed by heme A3 and copper B (CU(B)). The BNC reduces molecular oxygen to 2 water molecules using 4 electrons from cytochrome c in the IMS and 4 protons from the mitochondrial matrix. The chain is Cytochrome c oxidase subunit 3 (COX3) from Arabidopsis thaliana (Mouse-ear cress).